Reading from the N-terminus, the 143-residue chain is Large ribosomal subunit protein uL11 (143 aa).

This sequence belongs to the universal ribosomal protein uL11 family. As to quaternary structure, part of the ribosomal stalk of the 50S ribosomal subunit. Interacts with L10 and the large rRNA to form the base of the stalk. L10 forms an elongated spine to which L12 dimers bind in a sequential fashion forming a multimeric L10(L12)X complex. One or more lysine residues are methylated.

Forms part of the ribosomal stalk which helps the ribosome interact with GTP-bound translation factors. The sequence is that of Large ribosomal subunit protein uL11 from Psychrobacter sp. (strain PRwf-1).